A 221-amino-acid polypeptide reads, in one-letter code: Cytidylate kinase 1 (221 aa).

7 to 15 (GPSASGKSS) contributes to the ATP binding site.

The protein belongs to the cytidylate kinase family. Type 1 subfamily.

The protein resides in the cytoplasm. It carries out the reaction CMP + ATP = CDP + ADP. The catalysed reaction is dCMP + ATP = dCDP + ADP. The protein is Cytidylate kinase 1 of Borreliella afzelii (strain PKo) (Borrelia afzelii).